We begin with the raw amino-acid sequence, 3065 residues long: MAX gene-associated protein (3065 aa).

Residues Lys4 and Lys178 each participate in a glycyl lysine isopeptide (Lys-Gly) (interchain with G-Cter in SUMO2) cross-link. A DNA-binding region (T-box) is located at residues 84-260 (MWNEFYHRST…YNPFAKGFRD (177 aa)). The span at 259–277 (RDDGLNNKPQRDGKQKNSS) shows a compositional bias: basic and acidic residues. Positions 259 to 322 (RDDGLNNKPQ…GHETSGKGLE (64 aa)) are disordered. A compositionally biased stretch (polar residues) spans 278-289 (DQEGNNISSSSG). The segment covering 309–322 (PLSRGHETSGKGLE) has biased composition (basic and acidic residues). Residues Lys323, Lys329, Lys349, Lys432, Lys460, Lys465, and Lys482 each participate in a glycyl lysine isopeptide (Lys-Gly) (interchain with G-Cter in SUMO2) cross-link. A Phosphoserine modification is found at Ser534. Residue Lys570 forms a Glycyl lysine isopeptide (Lys-Gly) (interchain with G-Cter in SUMO2) linkage. The segment at 604–653 (QNASPNVPGKRGRPRKLKLCKAGRPPKNTGKSLISTKNTPVSPGSTFPDV) is disordered. Ser607 carries the phosphoserine modification. A Glycyl lysine isopeptide (Lys-Gly) (interchain with G-Cter in SUMO2) cross-link involves residue Lys613. Residues 613–624 (KRGRPRKLKLCK) show a composition bias toward basic residues. Polar residues predominate over residues 632-648 (TGKSLISTKNTPVSPGS). Residue Ser645 is modified to Phosphoserine. Residues Lys654, Lys785, Lys791, Lys817, and Lys826 each participate in a glycyl lysine isopeptide (Lys-Gly) (interchain with G-Cter in SUMO2) cross-link. Ser851 is modified (phosphoserine). The segment at 881-911 (STSYSLKPHSVPPVSRKAKSQNRQATFSGRT) is disordered. Over residues 901–911 (QNRQATFSGRT) the composition is skewed to polar residues. At Ser924 the chain carries Phosphoserine. A Glycyl lysine isopeptide (Lys-Gly) (interchain with G-Cter in SUMO2) cross-link involves residue Lys928. Residues 971–990 (RQAQQQQQQQQGSRPPGLSK) form a disordered region. Residues 972–981 (QAQQQQQQQQ) are compositionally biased toward low complexity. Glycyl lysine isopeptide (Lys-Gly) (interchain with G-Cter in SUMO2) cross-links involve residues Lys990, Lys1091, Lys1140, Lys1162, Lys1199, and Lys1207. Residues 1111–1147 (YDTLGEEAREEEEGIREEEEQLKEKKKRKKLEYTICE) are a coiled coil. Residue Ser1208 is modified to Phosphoserine. Disordered regions lie at residues 1246-1332 (RKKE…PGGP) and 1380-1429 (RKSR…MEDI). Low complexity-rich tracts occupy residues 1253–1269 (QPSS…QQTS) and 1310–1322 (KSSC…SSTS). 2 positions are modified to phosphoserine: Ser1430 and Ser1457. Residues Lys1461 and Lys1502 each participate in a glycyl lysine isopeptide (Lys-Gly) (interchain with G-Cter in SUMO2) cross-link. 3 disordered regions span residues 1488 to 1517 (SRKP…PGKN), 1905 to 1927 (SPPE…YSSG), and 1967 to 2029 (QMKR…EDRG). Polar residues-rich tracts occupy residues 1495 to 1514 (LPST…TNRP) and 1911 to 1927 (SFAS…YSSG). Basic and acidic residues predominate over residues 1968 to 1994 (MKRESQNPDQKDETNSIKREQETKKVL). Residues Lys1985 and Lys1992 each participate in a glycyl lysine isopeptide (Lys-Gly) (interchain with G-Cter in SUMO2) cross-link. A compositionally biased stretch (polar residues) spans 2008–2023 (IKQNSGAATSEETLND). Residues Lys2103, Lys2113, Lys2135, Lys2139, Lys2146, Lys2159, Lys2194, Lys2206, and Lys2238 each participate in a glycyl lysine isopeptide (Lys-Gly) (interchain with G-Cter in SUMO2) cross-link. The interval 2258–2316 (RRAAKSSRGNGHFQGHLLLPGEQIQPKQEKKGGRSSADFTVLDLEEDDEDDNEKTDDSI) is disordered. Omega-N-methylarginine is present on Arg2265. Residue Lys2284 forms a Glycyl lysine isopeptide (Lys-Gly) (interchain with G-Cter in SUMO2) linkage. Residues 2300 to 2316 (DLEEDDEDDNEKTDDSI) show a composition bias toward acidic residues. Residues Lys2378, Lys2413, Lys2457, and Lys2532 each participate in a glycyl lysine isopeptide (Lys-Gly) (interchain with G-Cter in SUMO2) cross-link. A bHLH domain is found at 2423–2474 (YYRRTHTANERRRRGEMRDLFEKLKITLGLLHSSKVSKSLILTRAFSEIQGL). At Ser2541 the chain carries Phosphoserine. Lys2546 participates in a covalent cross-link: Glycyl lysine isopeptide (Lys-Gly) (interchain with G-Cter in SUMO2). A disordered region spans residues 2576 to 2595 (KKDQATENTSPLNTPHTSAN). Positions 2581–2595 (TENTSPLNTPHTSAN) are enriched in polar residues. Glycyl lysine isopeptide (Lys-Gly) (interchain with G-Cter in SUMO2) cross-links involve residues Lys2629, Lys2679, Lys2698, and Lys2784. Residues 2668–2709 (GSKYPHEVPDSKPSDHLKDTVRNEDNSLEDKGRISSRGNRDG) are disordered. Positions 2671–2709 (YPHEVPDSKPSDHLKDTVRNEDNSLEDKGRISSRGNRDG) are enriched in basic and acidic residues. Residues 2817 to 2841 (DDTDETLTSLLNEIAFLNQQLNDDS) are a coiled coil. Phosphoserine occurs at positions 2910 and 2921. A disordered region spans residues 2944-2968 (AIDGGKNTSGLPAEPESVSSPPTLH). Ser2978 is subject to Phosphoserine. Lys3041 participates in a covalent cross-link: Glycyl lysine isopeptide (Lys-Gly) (interchain with G-Cter in SUMO2).

Interacts with MAX. Requires dimerization with MAX for E-box binding. Component of some MLL1/MLL complex, at least composed of the core components KMT2A/MLL1, ASH2L, HCFC1/HCF1, WDR5 and RBBP5, as well as the facultative components BACC1, CHD8, E2F6, HSP70, INO80C, KANSL1, LAS1L, MAX, MCRS1, MGA, MYST1/MOF, PELP1, PHF20, PRP31, RING2, RUVB1/TIP49A, RUVB2/TIP49B, SENP3, TAF1, TAF4, TAF6, TAF7, TAF9 and TEX10. Interacts with ZMYND11. As to expression, highly expressed in germ cells and granulosa cells.

The protein resides in the nucleus. Its function is as follows. Functions as a dual-specificity transcription factor, regulating the expression of both MAX-network and T-box family target genes. Functions as a repressor or an activator. Binds to 5'-AATTTCACACCTAGGTGTGAAATT-3' core sequence and seems to regulate MYC-MAX target genes. Suppresses transcriptional activation by MYC and inhibits MYC-dependent cell transformation. Function activated by heterodimerization with MAX. This heterodimerization serves the dual function of both generating an E-box-binding heterodimer and simultaneously blocking interaction of a corepressor. This is MAX gene-associated protein from Homo sapiens (Human).